A 186-amino-acid chain; its full sequence is Probable RNA 2'-phosphotransferase (186 aa).

It belongs to the KptA/TPT1 family.

In terms of biological role, removes the 2'-phosphate from RNA via an intermediate in which the phosphate is ADP-ribosylated by NAD followed by a presumed transesterification to release the RNA and generate ADP-ribose 1''-2''-cyclic phosphate (APPR&gt;P). May function as an ADP-ribosylase. The protein is Probable RNA 2'-phosphotransferase of Agrobacterium fabrum (strain C58 / ATCC 33970) (Agrobacterium tumefaciens (strain C58)).